A 641-amino-acid chain; its full sequence is MAVIGALPKEVAEAVSASRLLVVGAGGIGCELLKNLVLTGFTNLDVIDLDTIDVSNLNRQFLFQKKHVGRSKAQVAKESVLQFCPDASITAYHDSIMNPDYNVEFFKQFTMAMNALDNNAARNHVNRMCLAAGIPLIESGTAGYLGQVSVIKKGVTECYECQPKPTQKTFPGCTIRNTPSEPIHCIVWAKYLFNQLFGEEDADQEVAPDIADPEAAWDPTKAAERANASNVDGDIKRVSTKQWAKSTGYDPIKLFNKLFRDDIKYLLTMDRLWRKRKPPIPLEWASLHNKENCSEIQNESSLLGLKDQKVLNVASYAQLFSKSVETLREQLREKGDGAELVWDKDDVPAMDFVTAAANLRMHIFSMNMKSKFDVKSMAGNIIPAIATTNAVISGLIVLEGLKILSGNTEQCRTVFLNKQPNPRKKLLVPCSLDPPNPSCYVCAIKPEVTVKLNVHKVTVQMLQDKILKEKFAMVAPDVQIEDGKGTILISSEAGETDANNHRKISEFGIRNSSQLQADDFLQDYTLMMNILHSDEMEKDVDFEVVGDVPEKGPQKPPEESVKNITNGSDDGAQPSTSKAQDQDDVLIVDSDEESPSSSNADVGMESASLKRKLPDEEAVSSTKRKRIEPPVEEDDDIIALD.

Residues Gly24–Gly29, Asp48, Asn56–Arg59, Lys72, Ser95–Ile96, and Asp117–Arg122 each bind ATP. Cys158 and Cys161 together coordinate Zn(2+). Residue Cys173 is the Glycyl thioester intermediate of the active site. Positions 439 and 442 each coordinate Zn(2+). Residues Gly546–Asp641 form a disordered region. The span at Val548–Val561 shows a compositional bias: basic and acidic residues. Positions Lys562–Ala579 are enriched in polar residues. 2 stretches are compositionally biased toward acidic residues: residues Gln582–Ser594 and Pro630–Asp641.

It belongs to the ubiquitin-activating E1 family. As to quaternary structure, heterodimer of sae1 and uba2/sae2. The heterodimer corresponds to the two domains that are encoded on a single polypeptide chain in ubiquitin-activating enzyme E1. Interacts with ube2i.

It localises to the nucleus. The protein operates within protein modification; protein sumoylation. In terms of biological role, the heterodimer acts as an E1 ligase for sumo1, sumo2, and sumo3. It mediates ATP-dependent activation of sumo proteins followed by formation of a thioester bond between a sumo protein and a conserved active site cysteine residue on uba2/sae2. In Xenopus laevis (African clawed frog), this protein is SUMO-activating enzyme subunit 2-B (uba2-b).